Reading from the N-terminus, the 119-residue chain is UPF0102 protein Athe_0977 (119 aa).

The protein belongs to the UPF0102 family.

The chain is UPF0102 protein Athe_0977 from Caldicellulosiruptor bescii (strain ATCC BAA-1888 / DSM 6725 / KCTC 15123 / Z-1320) (Anaerocellum thermophilum).